The primary structure comprises 268 residues: Tropinone reductase homolog (268 aa).

Residue 21-45 (LVTGGTRGIGYAIVEELANFGAEVY) coordinates NADP(+). Ser154 is a substrate binding site. Tyr167 (proton acceptor) is an active-site residue.

This sequence belongs to the short-chain dehydrogenases/reductases (SDR) family.

In Datura stramonium (Jimsonweed), this protein is Tropinone reductase homolog.